Here is a 228-residue protein sequence, read N- to C-terminus: Uracil-DNA glycosylase (228 aa).

The active-site Proton acceptor is the D64.

The protein belongs to the uracil-DNA glycosylase (UDG) superfamily. UNG family.

The protein resides in the cytoplasm. It carries out the reaction Hydrolyzes single-stranded DNA or mismatched double-stranded DNA and polynucleotides, releasing free uracil.. Excises uracil residues from the DNA which can arise as a result of misincorporation of dUMP residues by DNA polymerase or due to deamination of cytosine. The protein is Uracil-DNA glycosylase of Yersinia pestis bv. Antiqua (strain Antiqua).